The primary structure comprises 278 residues: MQIIHTIRELRAWRKNAGKVAFVPTMGNLHEGHLALVREAKKRADNVVVSIFVNRLQFGQGEDFDKYPRTLQQDADKLEAEGVAVVFAPDEKELYPNVEQRYSVEPPNLQNELCGKFRPGHFLGVATVVSKLFNIVAPDVACFGKKDYQQLAVIKGLTEDLNFDVEIVPVDTGRAEDGLALSSRNQYLSAAERDEAPRLYRELKAVAESLAQGSLDYAGLEKRAVQSLTEYGWVVDYVEIRRADTLEVARAGDKKLVVLAAARLGTTRLIDNLEIKLP.

Residue 26-33 coordinates ATP; that stretch reads MGNLHEGH. The active-site Proton donor is His-33. Gln-57 contacts (R)-pantoate. Gln-57 lines the beta-alanine pocket. 144-147 contacts ATP; the sequence is GKKD. Gln-150 contacts (R)-pantoate. Residues Gly-173 and 181–184 contribute to the ATP site; that span reads LSSR.

It belongs to the pantothenate synthetase family. As to quaternary structure, homodimer.

The protein localises to the cytoplasm. The catalysed reaction is (R)-pantoate + beta-alanine + ATP = (R)-pantothenate + AMP + diphosphate + H(+). It participates in cofactor biosynthesis; (R)-pantothenate biosynthesis; (R)-pantothenate from (R)-pantoate and beta-alanine: step 1/1. Catalyzes the condensation of pantoate with beta-alanine in an ATP-dependent reaction via a pantoyl-adenylate intermediate. The chain is Pantothenate synthetase from Neisseria meningitidis serogroup C / serotype 2a (strain ATCC 700532 / DSM 15464 / FAM18).